We begin with the raw amino-acid sequence, 231 residues long: Large ribosomal subunit protein uL1 (231 aa).

This sequence belongs to the universal ribosomal protein uL1 family. As to quaternary structure, part of the 50S ribosomal subunit.

Binds directly to 23S rRNA. The L1 stalk is quite mobile in the ribosome, and is involved in E site tRNA release. In terms of biological role, protein L1 is also a translational repressor protein, it controls the translation of the L11 operon by binding to its mRNA. In Mesomycoplasma hyopneumoniae (strain 232) (Mycoplasma hyopneumoniae), this protein is Large ribosomal subunit protein uL1.